The chain runs to 333 residues: Pantothenate synthetase (333 aa).

27–34 lines the ATP pocket; that stretch reads MGALHEGH. The Proton donor role is filled by His-34. Residue Gln-61 coordinates (R)-pantoate. Gln-61 is a binding site for beta-alanine. 148 to 151 is an ATP binding site; sequence GQKD. Position 154 (Gln-154) interacts with (R)-pantoate. ATP is bound by residues Val-177 and 185 to 188; that span reads LSSR.

This sequence belongs to the pantothenate synthetase family. As to quaternary structure, homodimer.

Its subcellular location is the cytoplasm. The catalysed reaction is (R)-pantoate + beta-alanine + ATP = (R)-pantothenate + AMP + diphosphate + H(+). It functions in the pathway cofactor biosynthesis; (R)-pantothenate biosynthesis; (R)-pantothenate from (R)-pantoate and beta-alanine: step 1/1. Its function is as follows. Catalyzes the condensation of pantoate with beta-alanine in an ATP-dependent reaction via a pantoyl-adenylate intermediate. This Streptomyces avermitilis (strain ATCC 31267 / DSM 46492 / JCM 5070 / NBRC 14893 / NCIMB 12804 / NRRL 8165 / MA-4680) protein is Pantothenate synthetase.